A 542-amino-acid chain; its full sequence is Hydroxylamine reductase (542 aa).

Residues cysteine 3, cysteine 6, cysteine 15, and cysteine 21 each coordinate [4Fe-4S] cluster. Hybrid [4Fe-2O-2S] cluster-binding residues include histidine 243, glutamate 267, cysteine 311, cysteine 398, cysteine 426, cysteine 451, glutamate 485, and lysine 487. Cysteine persulfide is present on cysteine 398.

This sequence belongs to the HCP family. [4Fe-4S] cluster is required as a cofactor. It depends on hybrid [4Fe-2O-2S] cluster as a cofactor.

Its subcellular location is the cytoplasm. It catalyses the reaction A + NH4(+) + H2O = hydroxylamine + AH2 + H(+). Functionally, catalyzes the reduction of hydroxylamine to form NH(3) and H(2)O. This is Hydroxylamine reductase from Syntrophobacter fumaroxidans (strain DSM 10017 / MPOB).